We begin with the raw amino-acid sequence, 134 residues long: Large ribosomal subunit protein bL19 (134 aa).

The tract at residues 110–134 (ARLHQEEGPSSAAPASTPPAAAPQA) is disordered. Over residues 125–134 (STPPAAAPQA) the composition is skewed to pro residues.

Belongs to the bacterial ribosomal protein bL19 family.

Its function is as follows. This protein is located at the 30S-50S ribosomal subunit interface and may play a role in the structure and function of the aminoacyl-tRNA binding site. The chain is Large ribosomal subunit protein bL19 from Anaeromyxobacter sp. (strain Fw109-5).